The sequence spans 336 residues: Inactive serine/threonine-protein kinase PLK5 (336 aa).

Positions 1–65 constitute a Protein kinase; truncated domain; sequence MYTVLTGTPP…LDHLLQDDFF (65 aa). Disordered stretches follow at residues 109 to 135 and 224 to 245; these read PCPF…WDGE and GRTG…LPTP. The POLO box domain maps to 255–336; that stretch reads LLRFLASEHA…HHALRMLQSI (82 aa).

The protein belongs to the protein kinase superfamily. Ser/Thr protein kinase family. CDC5/Polo subfamily. As to expression, expressed in the brain, neurons and glial cells. Also expressed in highly differentiated cells, such as the serous acini in the parotid gland, distal and proximal tubules of the kidney, tubules of the seminal gland, Kupffer cells and some hepatocytes in the liver, and some cells in the germinal center of lymph nodes (at protein level).

The protein resides in the nucleus. It is found in the nucleolus. It localises to the cytoplasm. Its function is as follows. Inactive serine/threonine-protein kinase that plays a role in cell cycle progression and neuronal differentiation. The sequence is that of Inactive serine/threonine-protein kinase PLK5 (PLK5) from Homo sapiens (Human).